Reading from the N-terminus, the 214-residue chain is Probable nicotinate-nucleotide adenylyltransferase (214 aa).

The protein belongs to the NadD family.

It carries out the reaction nicotinate beta-D-ribonucleotide + ATP + H(+) = deamido-NAD(+) + diphosphate. It participates in cofactor biosynthesis; NAD(+) biosynthesis; deamido-NAD(+) from nicotinate D-ribonucleotide: step 1/1. Functionally, catalyzes the reversible adenylation of nicotinate mononucleotide (NaMN) to nicotinic acid adenine dinucleotide (NaAD). The sequence is that of Probable nicotinate-nucleotide adenylyltransferase from Pelodictyon phaeoclathratiforme (strain DSM 5477 / BU-1).